We begin with the raw amino-acid sequence, 519 residues long: T-complex protein 1 subunit gamma (519 aa).

It belongs to the TCP-1 chaperonin family. As to quaternary structure, component of the T-complex protein 1 (TCP1) complex.

It is found in the cytoplasm. Molecular chaperone; assists the folding of proteins upon ATP hydrolysis. The sequence is that of T-complex protein 1 subunit gamma (CCT3) from Encephalitozoon cuniculi (strain GB-M1) (Microsporidian parasite).